The primary structure comprises 368 residues: Protein L-Myc (368 aa).

3 disordered regions span residues 39-79, 112-179, and 218-295; these read PPTS…RGHS, RLAP…EKRR, and FPPE…FLER. Residues 135–147 are compositionally biased toward polar residues; the sequence is LEASNPAPATQCQ. Over residues 247 to 258 the composition is skewed to acidic residues; sequence EEEEEEEEEEEI. Residues 283-294 are compositionally biased toward basic and acidic residues; sequence DVTKRKNHNFLE. The region spanning 285–337 is the bHLH domain; the sequence is TKRKNHNFLERKRRNDLRSRFLALRDQVPTLASCSKAPKVVILSKALEYLQAL. Positions 337 to 365 are leucine-zipper; the sequence is LVGAEKKMATEKRQLRCRQQQLQKRIAYL.

As to quaternary structure, efficient DNA binding requires dimerization with another bHLH protein. Binds DNA as a heterodimer with MAX.

Its subcellular location is the nucleus. This chain is Protein L-Myc (Mycl), found in Mus musculus (Mouse).